We begin with the raw amino-acid sequence, 185 residues long: ATP synthase subunit delta (185 aa).

It belongs to the ATPase delta chain family. F-type ATPases have 2 components, F(1) - the catalytic core - and F(0) - the membrane proton channel. F(1) has five subunits: alpha(3), beta(3), gamma(1), delta(1), epsilon(1). CF(0) has four main subunits: a(1), b(2) and c(10-14). The alpha and beta chains form an alternating ring which encloses part of the gamma chain. F(1) is attached to F(0) by a central stalk formed by the gamma and epsilon chains, while a peripheral stalk is formed by the delta and b chains.

Its subcellular location is the cell membrane. In terms of biological role, f(1)F(0) ATP synthase produces ATP from ADP in the presence of a proton or sodium gradient. F-type ATPases consist of two structural domains, F(1) containing the extramembraneous catalytic core and F(0) containing the membrane proton channel, linked together by a central stalk and a peripheral stalk. During catalysis, ATP synthesis in the catalytic domain of F(1) is coupled via a rotary mechanism of the central stalk subunits to proton translocation. This protein is part of the stalk that links CF(0) to CF(1). It either transmits conformational changes from CF(0) to CF(1) or is implicated in proton conduction. This is ATP synthase subunit delta from Heliobacterium modesticaldum (strain ATCC 51547 / Ice1).